Here is a 295-residue protein sequence, read N- to C-terminus: uncharacterized protein (295 aa).

Residues 2–226 form the ABC transporter domain; that stretch reads LSIESLCKSY…QQTNVFTLSV (225 aa). Residue 34–41 coordinates ATP; the sequence is GPNGAGKT.

Belongs to the ABC transporter superfamily.

This is an uncharacterized protein from Bacillus subtilis (strain 168).